We begin with the raw amino-acid sequence, 315 residues long: Coproporphyrin III ferrochelatase (315 aa).

Fe-coproporphyrin III contacts are provided by residues tyrosine 13, arginine 30, 46–47, serine 54, and tyrosine 125; that span reads RY. Fe(2+) is bound by residues histidine 183 and glutamate 264.

Belongs to the ferrochelatase family.

The protein localises to the cytoplasm. It carries out the reaction Fe-coproporphyrin III + 2 H(+) = coproporphyrin III + Fe(2+). Its pathway is porphyrin-containing compound metabolism; protoheme biosynthesis. Functionally, involved in coproporphyrin-dependent heme b biosynthesis. Catalyzes the insertion of ferrous iron into coproporphyrin III to form Fe-coproporphyrin III. In Anoxybacillus flavithermus (strain DSM 21510 / WK1), this protein is Coproporphyrin III ferrochelatase.